Here is a 141-residue protein sequence, read N- to C-terminus: Large ribosomal subunit protein uL11 (141 aa).

It belongs to the universal ribosomal protein uL11 family. In terms of assembly, part of the ribosomal stalk of the 50S ribosomal subunit. Interacts with L10 and the large rRNA to form the base of the stalk. L10 forms an elongated spine to which L12 dimers bind in a sequential fashion forming a multimeric L10(L12)X complex. One or more lysine residues are methylated.

Forms part of the ribosomal stalk which helps the ribosome interact with GTP-bound translation factors. The sequence is that of Large ribosomal subunit protein uL11 from Streptococcus gordonii (strain Challis / ATCC 35105 / BCRC 15272 / CH1 / DL1 / V288).